Consider the following 380-residue polypeptide: RNA-binding motif protein, Y chromosome, family 9 (380 aa).

An RRM domain is found at 8–86 (GKIFIGGLNI…KRIKVKQARR (79 aa)). Disordered stretches follow at residues 82-226 (KQAR…STSR) and 279-358 (HEAP…YSAS). Over residues 166–178 (RSATSAQTRSNTG) the composition is skewed to polar residues. 2 stretches are compositionally biased toward basic and acidic residues: residues 180-190 (RGREPHRREIS) and 333-351 (IDREYFDREGRQERGHSPK).

Testis-specific.

The protein localises to the nucleus. Its function is as follows. RNA-binding protein which may be involved in spermatogenesis. May be required for sperm development, possibly by participating in pre-mRNA splicing in the testis. The sequence is that of RNA-binding motif protein, Y chromosome, family 9 from Mus musculus (Mouse).